Consider the following 80-residue polypeptide: UPF0291 protein EF_1580 (80 aa).

The tract at residues 60–80 (TDVTPEKLKKIQREKGLHNRK) is disordered. Residues 63–80 (TPEKLKKIQREKGLHNRK) show a composition bias toward basic and acidic residues.

This sequence belongs to the UPF0291 family.

It is found in the cytoplasm. This chain is UPF0291 protein EF_1580, found in Enterococcus faecalis (strain ATCC 700802 / V583).